The primary structure comprises 806 residues: NADH:(hydroxy)cinnamate reductase subunit CrdB (806 aa).

At serine 257 the chain carries FMN phosphoryl serine. Alanine 310, glutamate 329, asparagine 337, threonine 338, glycine 342, glycine 343, and aspartate 576 together coordinate FAD. Arginine 635 functions as the Proton donor in the catalytic mechanism. Residues histidine 742, glutamate 771, alanine 786, and leucine 787 each coordinate FAD.

This sequence belongs to the FAD-dependent oxidoreductase 2 family. FRD/SDH subfamily. As to quaternary structure, NADH:(hydroxy)cinnamate reductase Crd is a heterodimer composed of CrdA and CrdB subunits, encoded by adjacent genes. It depends on FAD as a cofactor. Requires FMN as cofactor. In terms of processing, is flavinylated on Ser-257 by ApbE, encoded in a neighboring gene. Covalent attachment of FMN is essential for catalytic activity.

It catalyses the reaction 3-phenylpropanoate + NAD(+) = (E)-cinnamate + NADH + H(+). It carries out the reaction 3-(3,4-dihydroxyphenyl)propanoate + NAD(+) = (E)-caffeate + NADH + H(+). The enzyme catalyses phloretate + NAD(+) = (E)-4-coumarate + NADH + H(+). The catalysed reaction is dihydroferulate + NAD(+) = (E)-ferulate + NADH + H(+). Is inactivated by molecular oxygen, allowing regulation of Crd activity by medium oxygen level. In terms of biological role, component of the NADH:(hydroxy)cinnamate reductase Crd that catalyzes the reduction of the double bond in cinnamate, p-coumarate, caffeate, and ferulate under anaerobic conditions with NADH or methyl viologen as the electron donor. Is moderately active against acrylate and practically inactive against urocanate, fumarate, methacrylate and crotonate. CrdB is the catalytic subunit that binds substrates. Is likely involved in protecting V.ruber from (hydroxy)cinnamate poisoning. The polypeptide is NADH:(hydroxy)cinnamate reductase subunit CrdB (Vibrio ruber (strain DSM 16370 / JCM 11486 / BCRC 17186 / CECT 7878 / LMG 23124 / VR1)).